The following is a 145-amino-acid chain: Transcriptional regulator MraZ (145 aa).

SpoVT-AbrB domains lie at 5-50 (TFNH…ALPQ) and 81-124 (AHEV…DKAA).

It belongs to the MraZ family. Forms oligomers.

It is found in the cytoplasm. It localises to the nucleoid. This chain is Transcriptional regulator MraZ, found in Anaeromyxobacter sp. (strain Fw109-5).